The chain runs to 1420 residues: Mediator of RNA polymerase II transcription subunit 13 (1420 aa).

Phosphoserine is present on residues Ser-370, Ser-375, and Ser-425. Polar residues predominate over residues 416–427; that stretch reads TTVSNDLENSPL. Residues 416-511 are disordered; it reads TTVSNDLENS…TNESNKSISD (96 aa). Residues 429-439 are compositionally biased toward basic and acidic residues; it reads TELEANGRSLE. The segment covering 440-453 has biased composition (polar residues); that stretch reads KVNNSVSKTGSVDT. Positions 454-484 are enriched in basic and acidic residues; sequence LHNKEGTLEQREQNENLPSDKSDSMVDKELF. Residues 494-508 are compositionally biased toward low complexity; it reads GDSNKSNSTNESNKS. Residue Thr-601 is modified to Phosphothreonine. Ser-608 bears the Phosphoserine; by PKA mark. Ser-636 carries the phosphoserine modification. Residues 653–691 form a disordered region; that stretch reads LSSSEEEEDEEENGSSDEDLKSLNVRDDMKPSDNISTNT. Over residues 655-669 the composition is skewed to acidic residues; the sequence is SSEEEEDEEENGSSD. Positions 670–683 are enriched in basic and acidic residues; the sequence is EDLKSLNVRDDMKP. Ser-748 bears the Phosphoserine mark.

This sequence belongs to the Mediator complex subunit 13 family. In terms of assembly, component of the SRB8-11 complex which consists of SRB8, SSN2/SRB9, SSN3/SRB10 and SSN8/SRB11. The SRB8-11 complex associates with the Mediator complex. The SSN3/SRB10 and SSN8/SRB11 kinase-cyclin pair also associate with the RNA polymerase II holoenzyme. Post-translationally, phosphorylated. PKA-dependent phosphorylation at 'Ser-608' is enhanced by activation of the RAS signaling pathway.

The protein localises to the nucleus. Its function is as follows. Component of the SRB8-11 complex. The SRB8-11 complex is a regulatory module of the Mediator complex which is itself involved in regulation of basal and activated RNA polymerase II-dependent transcription. The SRB8-11 complex may be involved in the transcriptional repression of a subset of genes regulated by Mediator. It may inhibit the association of the Mediator complex with RNA polymerase II to form the holoenzyme complex. The SRB8-11 complex phosphorylates the C-terminal domain (CTD) of the largest subunit of RNA polymerase II RPB1 at serines 2 and 5. The sequence is that of Mediator of RNA polymerase II transcription subunit 13 (SSN2) from Saccharomyces cerevisiae (strain ATCC 204508 / S288c) (Baker's yeast).